A 379-amino-acid polypeptide reads, in one-letter code: Glutamate 5-kinase (379 aa).

Lys-15 is an ATP binding site. Ser-59, Asp-146, and Asn-158 together coordinate substrate. 178-179 is an ATP binding site; that stretch reads TD. In terms of domain architecture, PUA spans 285–363; the sequence is RGAVTVDVGA…SEFERLLGYS (79 aa).

This sequence belongs to the glutamate 5-kinase family.

It is found in the cytoplasm. The catalysed reaction is L-glutamate + ATP = L-glutamyl 5-phosphate + ADP. Its pathway is amino-acid biosynthesis; L-proline biosynthesis; L-glutamate 5-semialdehyde from L-glutamate: step 1/2. Catalyzes the transfer of a phosphate group to glutamate to form L-glutamate 5-phosphate. The protein is Glutamate 5-kinase of Paracidovorax citrulli (strain AAC00-1) (Acidovorax citrulli).